A 398-amino-acid polypeptide reads, in one-letter code: NADH-quinone oxidoreductase subunit D (398 aa).

The protein belongs to the complex I 49 kDa subunit family. As to quaternary structure, NDH-1 is composed of 14 different subunits. Subunits NuoB, C, D, E, F, and G constitute the peripheral sector of the complex.

Its subcellular location is the cell inner membrane. It carries out the reaction a quinone + NADH + 5 H(+)(in) = a quinol + NAD(+) + 4 H(+)(out). In terms of biological role, NDH-1 shuttles electrons from NADH, via FMN and iron-sulfur (Fe-S) centers, to quinones in the respiratory chain. The immediate electron acceptor for the enzyme in this species is believed to be ubiquinone. Couples the redox reaction to proton translocation (for every two electrons transferred, four hydrogen ions are translocated across the cytoplasmic membrane), and thus conserves the redox energy in a proton gradient. This is NADH-quinone oxidoreductase subunit D from Bradyrhizobium diazoefficiens (strain JCM 10833 / BCRC 13528 / IAM 13628 / NBRC 14792 / USDA 110).